Consider the following 261-residue polypeptide: Probable cyclic nucleotide phosphodiesterase PSM_A2567 (261 aa).

7 residues coordinate Fe cation: Asp-22, His-24, Asp-62, Asn-94, His-160, His-198, and His-200. Residues His-24, Asp-62, and 94 to 95 (NH) each bind AMP. His-200 contributes to the AMP binding site.

The protein belongs to the cyclic nucleotide phosphodiesterase class-III family. Requires Fe(2+) as cofactor.

This chain is Probable cyclic nucleotide phosphodiesterase PSM_A2567, found in Pseudoalteromonas sp. (strain SM9913).